The following is a 217-amino-acid chain: Ribosomal large subunit pseudouridine synthase E (217 aa).

Residues 19–28 (HQVKRFSSQR) show a composition bias toward polar residues. The segment at 19–38 (HQVKRFSSQRSTRRKPENQP) is disordered. The active-site Nucleophile is D79.

Belongs to the pseudouridine synthase RsuA family.

It catalyses the reaction uridine(2457) in 23S rRNA = pseudouridine(2457) in 23S rRNA. Functionally, responsible for synthesis of pseudouridine from uracil-2457 in 23S ribosomal RNA. The chain is Ribosomal large subunit pseudouridine synthase E (rluE) from Escherichia coli O157:H7.